The primary structure comprises 489 residues: Long chain base biosynthesis protein 2d (489 aa).

A helical membrane pass occupies residues 4-24 (LPYVTALTTLFSYGLLFAFGQ). Position 311 is an N6-(pyridoxal phosphate)lysine (Lys-311).

This sequence belongs to the class-II pyridoxal-phosphate-dependent aminotransferase family. As to quaternary structure, heterodimer with LCB1. Component of the serine palmitoyltransferase (SPT) complex, composed of LCB1 and LCB2. The cofactor is pyridoxal 5'-phosphate.

It localises to the endoplasmic reticulum membrane. The enzyme catalyses L-serine + hexadecanoyl-CoA + H(+) = 3-oxosphinganine + CO2 + CoA. The protein operates within lipid metabolism; sphingolipid metabolism. Its function is as follows. Serine palmitoyltransferase (SPT). The heterodimer formed with LCB1 constitutes the catalytic core. The polypeptide is Long chain base biosynthesis protein 2d (Oryza sativa subsp. japonica (Rice)).